The sequence spans 347 residues: Quinolinate synthase (347 aa).

Iminosuccinate-binding residues include His47 and Ser68. Cys113 provides a ligand contact to [4Fe-4S] cluster. Residues 139–141 (YAN) and Ser156 each bind iminosuccinate. Cys200 serves as a coordination point for [4Fe-4S] cluster. Residues 226–228 (HPE) and Thr243 contribute to the iminosuccinate site. Cys297 serves as a coordination point for [4Fe-4S] cluster.

This sequence belongs to the quinolinate synthase family. Type 1 subfamily. [4Fe-4S] cluster serves as cofactor.

Its subcellular location is the cytoplasm. It catalyses the reaction iminosuccinate + dihydroxyacetone phosphate = quinolinate + phosphate + 2 H2O + H(+). The protein operates within cofactor biosynthesis; NAD(+) biosynthesis; quinolinate from iminoaspartate: step 1/1. In terms of biological role, catalyzes the condensation of iminoaspartate with dihydroxyacetone phosphate to form quinolinate. The polypeptide is Quinolinate synthase (Shigella boydii serotype 18 (strain CDC 3083-94 / BS512)).